Consider the following 261-residue polypeptide: Acyl-[acyl-carrier-protein]--UDP-N-acetylglucosamine O-acyltransferase (261 aa).

Belongs to the transferase hexapeptide repeat family. LpxA subfamily. As to quaternary structure, homotrimer.

It localises to the cytoplasm. The catalysed reaction is a (3R)-hydroxyacyl-[ACP] + UDP-N-acetyl-alpha-D-glucosamine = a UDP-3-O-[(3R)-3-hydroxyacyl]-N-acetyl-alpha-D-glucosamine + holo-[ACP]. The protein operates within glycolipid biosynthesis; lipid IV(A) biosynthesis; lipid IV(A) from (3R)-3-hydroxytetradecanoyl-[acyl-carrier-protein] and UDP-N-acetyl-alpha-D-glucosamine: step 1/6. Its function is as follows. Involved in the biosynthesis of lipid A, a phosphorylated glycolipid that anchors the lipopolysaccharide to the outer membrane of the cell. The chain is Acyl-[acyl-carrier-protein]--UDP-N-acetylglucosamine O-acyltransferase from Sulfurimonas denitrificans (strain ATCC 33889 / DSM 1251) (Thiomicrospira denitrificans (strain ATCC 33889 / DSM 1251)).